The primary structure comprises 899 residues: MYKIKNNESDINSDDCNETAQECIYGFSSPKKSRKESPIFVQNNDDTCSSNNIYEKKTCSNTSASSVKKYDKKEQSLCSDINNYNKVNIEGLKINERNYDRINNSEEETNINDDNNDDNNGDYDDDNNSDDDDDNDDNNNNDDNNNDDDEDVDDFEDIKENDEYKDPTYSDIYKEAKKCNIRCENIMNSSVNKKNLEEINESDPLNSSDNSMTSSSEESCSEESDKESDKESDKDGNLYDEELNEIIEEGYFKELIPAIPHDILQAYISCLKICGFERQVQLHRLINLLGDLRDPISVIQILGLPGMGKTKVVKNFIKLTNVPFAYVNCLMAVYQSGRSAKNVIYHTILKDLSINLLNEFNEYKKINNITNYSYDPTKLVPNHVSNTDNFFSILHKLLSFKPEDILNNKRTTENIRSPSNSNNNKKKKKEQNDSTGKNSKEECNNNEDDDDDNNKNNFNNNNSNNVRFNSNTNYYKDKLYDRSVVFILDNIRYLVRTHPDLFYALTRIHEYIKGPYNDVTKANKTTRGLCIILINRSPLPDEIFDGLPQPPTVWFDSYTSEMCKNILYRLYNSMCFESLLTYNDKDLKIYYVKHNKNEFLIKRNDVILENDVIYDIWCRYVDYIINVSYKDYKSDFHELLFICSHMWPLFIKPILDGVLEPIVENMNALQRNIDTHIRVATYNHSSHFTFELIDSVFLNENNLKNKIDLSFYSKILLVGAYLASRNLPLTDKRFFNATVKGGAFTLPKKRKGKNKNESILTLLSKSIPKNFTFIRWLCLTDCLLVCFFDEQLILNSLICQQINTLIQLGFISFSSPNNLSCLVRNSLMNGVQWSGYCGSALLNTTTNFSSLTNNIFCETNNSMTYESLDPYTKLVIQVPEETIRNISKEMKIPLDELII.

Disordered regions lie at residues 27–47 (FSSP…NDDT), 100–166 (DRIN…EYKD), and 194–238 (KNLE…DGNL). The segment covering 105 to 160 (SEEETNINDDNNDDNNGDYDDDNNSDDDDDNDDNNNNDDNNNDDDEDVDDFEDIKE) has biased composition (acidic residues). Residues 207-218 (SSDNSMTSSSEE) show a composition bias toward low complexity. Positions 227–237 (ESDKESDKDGN) are enriched in basic and acidic residues. 303–310 (GLPGMGKT) contacts ATP. The interval 409-469 (KRTTENIRSP…NNNSNNVRFN (61 aa)) is disordered. A compositionally biased stretch (low complexity) spans 455-469 (KNNFNNNNSNNVRFN).

Belongs to the ORC5 family. In terms of assembly, component of the origin recognition complex (ORC). Interacts with PCNA1; the interaction occurs during the trophozoite stage but not at the late schizont stage.

Its subcellular location is the nucleus. It carries out the reaction ATP + H2O = ADP + phosphate + H(+). Its function is as follows. Component of the origin recognition complex (ORC) that binds origins of replication. The protein is Origin recognition complex subunit 5 of Plasmodium falciparum (isolate 3D7).